We begin with the raw amino-acid sequence, 181 residues long: uncharacterized protein (181 aa).

This is an uncharacterized protein from Acanthamoeba polyphaga (Amoeba).